We begin with the raw amino-acid sequence, 485 residues long: Cholesterol 16,22-dihydroxylase CYP90G4 (485 aa).

The helical transmembrane segment at 4-24 (VVILFFLFPTLLVLVVAVLGL) threads the bilayer. Cys-432 serves as a coordination point for heme.

This sequence belongs to the cytochrome P450 family. As to expression, mainly expressed in leaves and, at low levels, in roots and stems.

The protein resides in the membrane. The catalysed reaction is cholesterol + 2 reduced [NADPH--hemoprotein reductase] + 2 O2 = (16S,22S)-dihydroxycholesterol + 2 oxidized [NADPH--hemoprotein reductase] + 2 H2O + 2 H(+). It functions in the pathway steroid metabolism; cholesterol metabolism. Functionally, involved in the biosynthesis of spiroketal steroid and saponin natural products from cholesterol such as diosgenin and analogs (e.g. furostanol and spirostanol), plant defense compounds used as main precursors for the industrial production of steroid hormones. During the 5,6-spiroketalization of cholesterol, catalyzes the hydroxylation of cholesterol to form 16S,22S-dihydroxycholesterol and, possibly, the subsequent conversion of 16S,22S-dihydroxycholesterol into 16-oxo-22-hydroxy-cholesterol and 16-hydroxy-22-oxo-cholesterol. 16-hydroxy-22-oxo-cholesterol submit a spontaneous reaction leading to the production of furostanol-type steroid diastereomers, precursors of diosgenin. This is Cholesterol 16,22-dihydroxylase CYP90G4 from Paris polyphylla (Daiswa polyphylla).